Consider the following 311-residue polypeptide: Acetyl-coenzyme A carboxylase carboxyl transferase subunit alpha (311 aa).

Residues 34 to 286 enclose the CoA carboxyltransferase C-terminal domain; that stretch reads EKDLQKEASK…KEYYLQNIRE (253 aa).

It belongs to the AccA family. Acetyl-CoA carboxylase is a heterohexamer composed of biotin carboxyl carrier protein (AccB), biotin carboxylase (AccC) and two subunits each of ACCase subunit alpha (AccA) and ACCase subunit beta (AccD).

Its subcellular location is the cytoplasm. The catalysed reaction is N(6)-carboxybiotinyl-L-lysyl-[protein] + acetyl-CoA = N(6)-biotinyl-L-lysyl-[protein] + malonyl-CoA. Its pathway is lipid metabolism; malonyl-CoA biosynthesis; malonyl-CoA from acetyl-CoA: step 1/1. In terms of biological role, component of the acetyl coenzyme A carboxylase (ACC) complex. First, biotin carboxylase catalyzes the carboxylation of biotin on its carrier protein (BCCP) and then the CO(2) group is transferred by the carboxyltransferase to acetyl-CoA to form malonyl-CoA. This chain is Acetyl-coenzyme A carboxylase carboxyl transferase subunit alpha, found in Nitratiruptor sp. (strain SB155-2).